The sequence spans 282 residues: Deoxyribonuclease-1 (282 aa).

Residues 1–22 form the signal peptide; sequence MRGMKLLGALLALAALLQGAVS. N-linked (GlcNAc...) asparagine glycosylation is present at Asn40. Residue Glu100 is part of the active site. Residues Cys123 and Cys126 are joined by a disulfide bond. A glycan (N-linked (GlcNAc...) asparagine) is linked at Asn128. His156 is an active-site residue. A disulfide bond links Cys195 and Cys231.

The protein belongs to the DNase I family. It depends on Ca(2+) as a cofactor. Requires Mg(2+) as cofactor. In terms of tissue distribution, principally in tissues of the digestive system. Highest levels found in urine, but also relatively abundant in semen and saliva.

It is found in the secreted. The protein resides in the zymogen granule. The protein localises to the nucleus envelope. It catalyses the reaction Endonucleolytic cleavage to 5'-phosphodinucleotide and 5'-phosphooligonucleotide end-products.. Its function is as follows. Serum endocuclease secreted into body fluids by a wide variety of exocrine and endocrine organs. Expressed by non-hematopoietic tissues and preferentially cleaves protein-free DNA. Among other functions, seems to be involved in cell death by apoptosis. Binds specifically to G-actin and blocks actin polymerization. Together with DNASE1L3, plays a key role in degrading neutrophil extracellular traps (NETs). NETs are mainly composed of DNA fibers and are released by neutrophils to bind pathogens during inflammation. Degradation of intravascular NETs by DNASE1 and DNASE1L3 is required to prevent formation of clots that obstruct blood vessels and cause organ damage following inflammation. The protein is Deoxyribonuclease-1 of Homo sapiens (Human).